The sequence spans 252 residues: Putative phosphonates utilization ATP-binding protein PhnK (252 aa).

Positions 6–246 constitute an ABC transporter domain; it reads LSVNNLTHLY…PHHPYTQLLV (241 aa). 38–45 is a binding site for ATP; the sequence is GESGSGKT.

Belongs to the ABC transporter superfamily. Forms a complex with PhnG, PhnH, PhnI and PhnJ with the suggested composition PhnG(4)H(2)I(2)J(2)K.

Its function is as follows. Belongs to an operon involved in alkylphosphonate uptake and C-P lyase. Exact function not known. PhnK is not required for the ribophosphonate triphosphate (RPnTP) synthase reaction. In Escherichia coli (strain K12), this protein is Putative phosphonates utilization ATP-binding protein PhnK (phnK).